We begin with the raw amino-acid sequence, 315 residues long: Replication factor C small subunit (315 aa).

43–50 is an ATP binding site; sequence GSPGVGKT.

It belongs to the activator 1 small subunits family. RfcS subfamily. Heteromultimer composed of small subunits (RfcS) and large subunits (RfcL).

Part of the RFC clamp loader complex which loads the PCNA sliding clamp onto DNA. This Methanococcus maripaludis (strain C7 / ATCC BAA-1331) protein is Replication factor C small subunit.